An 882-amino-acid polypeptide reads, in one-letter code: MELDDFNSRILSQIFDKSWKVRFEAYESLLHALNRALDDSDVCFQPWIHDPALWKQGLCDSNVPTQEHAVKSLRCFLDKSRQKGVNSAKSFVVAPLLEKCLPSPRQSIRDASHQALLILAKSDALDYVLEGLFSAARVKHPKQAVASIKELNSLLENFGIPALSPIPFYKLIPTLFAQSDKNIRQEASNLSITLYAWVGNAFKTHVFPQLKQIQVSDLEASFQNVTSRTTTGGHISNSLNTQEVVLPSFSSNAKPKPHLSSKSSSQGNTLQRSTSSFSTPNRKVSQPSDFSASPSRSIVSPAKNIVGSTPVDVLSKLTPEFHTALSSPKWKDRKEALESMVPVCSNPVYQEGDYSELLRVIAKSLKDANVVVVGVAALLLTHIAKALRKGFLPYTGIVLPSLFDRFKERKSSLVHSLLDAANAIFESCGLNDIMDETLEFLKHKNPQVKTETLRWLNRCLQLTDVCPPRASLETLCSLCVTLINDTFEPVRMATTNVLATLVQIFSQPVLSKYIVGLDPKKLPKILELSKDITVNAHPNQPSRPRLPRVASPLKTSPVKLAVTPQAPSPLPSSNPSQASLTEESLSTRSSPTKPSTTSLRSQSLVNRFASSTLKAPSSSSKGVSNAASSKQSFPSSPSISKKLETSRLSTKKLPGSTMKAASALKEYPQQQSMKSGGEKQDNLVTITMSEKVELDLLREEKAIRQVQEAEDALERERLFREINDLQIQNAEMKEQVYEKESTISQKEVEITSLRNEKDRLSTRLQQVLLELEKQHETNEEAMDIDLKVPESGAIGRVTTRATATTAMDESGNAGMVSSGIHSVSTKPSSYGTRRSLAGSMLQKPTQFSRPSFMFSPEARDNWRESHDLSSHLWEQIQRMKKA.

The interval S250–S297 is disordered. Over residues Q266–S297 the composition is skewed to polar residues. At T279 the chain carries Phosphothreonine; by CDC2. Residues S293, S300, S551, S556, and S590 each carry the phosphoserine; by CDC2 modification. Disordered stretches follow at residues V562–E678 and E809–R833. Low complexity-rich tracts occupy residues S579–S601 and A609–S640. S649 carries the phosphoserine modification. T650 bears the Phosphothreonine mark. The segment covering G819–T832 has biased composition (polar residues).

Its subcellular location is the cytoplasm. It is found in the cytoskeleton. The protein localises to the microtubule organizing center. The protein resides in the spindle pole body. It localises to the spindle. Has a role in sister chromatid separation. The chain is Phosphoprotein p93 (dis1) from Schizosaccharomyces pombe (strain 972 / ATCC 24843) (Fission yeast).